Consider the following 229-residue polypeptide: Putative N-acetylmannosamine-6-phosphate 2-epimerase (229 aa).

This sequence belongs to the NanE family.

The catalysed reaction is an N-acyl-D-glucosamine 6-phosphate = an N-acyl-D-mannosamine 6-phosphate. The protein operates within amino-sugar metabolism; N-acetylneuraminate degradation; D-fructose 6-phosphate from N-acetylneuraminate: step 3/5. Functionally, converts N-acetylmannosamine-6-phosphate (ManNAc-6-P) to N-acetylglucosamine-6-phosphate (GlcNAc-6-P). The sequence is that of Putative N-acetylmannosamine-6-phosphate 2-epimerase from Escherichia coli O8 (strain IAI1).